The chain runs to 343 residues: Glucokinase (343 aa).

Gly18 to Thr23 provides a ligand contact to ATP.

Belongs to the bacterial glucokinase family.

Its subcellular location is the cytoplasm. The catalysed reaction is D-glucose + ATP = D-glucose 6-phosphate + ADP + H(+). This Brucella abortus (strain 2308) protein is Glucokinase.